The sequence spans 631 residues: Probable methyltransferase PMT16 (631 aa).

At 1–14 the chain is on the cytoplasmic side; it reads MNLFTRISSRTKKA. Residues 15-35 traverse the membrane as a helical; Signal-anchor for type II membrane protein segment; it reads NLYYVTLVALLCIASYLLGIW. Topologically, residues 36-631 are lumenal; that stretch reads QNTAVNPRAA…EDKNNTSALS (596 aa). Residues Asn-61, Asn-230, and Asn-626 are each glycosylated (N-linked (GlcNAc...) asparagine).

This sequence belongs to the methyltransferase superfamily.

It is found in the endoplasmic reticulum membrane. This Arabidopsis thaliana (Mouse-ear cress) protein is Probable methyltransferase PMT16.